The sequence spans 674 residues: Dystrophia myotonica WD repeat-containing protein (674 aa).

A2 carries the post-translational modification N-acetylalanine. Disordered stretches follow at residues G31–P92 and E103–G122. Residues P53–P65 show a composition bias toward pro residues. Low complexity predominate over residues A66 to A77. A compositionally biased stretch (pro residues) spans S78 to A90. Low complexity predominate over residues A107–G118. WD repeat units follow at residues I211–P251, V282–L321, S324–R363, G366–G409, and A413–H453. Disordered stretches follow at residues E384–S419, L456–T516, R532–L573, and D637–V674. 2 stretches are compositionally biased toward low complexity: residues A457–G478 and P487–P499. Position 495 is a phosphoserine (S495). Composition is skewed to gly residues over residues A500 to G509 and S550 to K563. The residue at position 551 (R551) is an Omega-N-methylarginine. The WD 6 repeat unit spans residues I601–E638. Residues A642–V674 are compositionally biased toward polar residues.

As to quaternary structure, component of the USP12/DMWD/WDR48 deubiquitinating complex. Interacts with USP12; promotes its enzymatic activity. Interacts with USP46.

Its subcellular location is the cytoplasm. It localises to the nucleus. The protein resides in the perikaryon. The protein localises to the cell projection. It is found in the dendrite. In terms of biological role, regulator of the deubiquitinating USP12/DMWD/WDR48 complex. Functions as a cofactor that promotes USP12 enzymatic activity. This is Dystrophia myotonica WD repeat-containing protein from Homo sapiens (Human).